Consider the following 448-residue polypeptide: Arginine synthetase ArcE (448 aa).

As to quaternary structure, probably forms homotetramers and higher assemblies of tetramers. Requires Mg(2+) as cofactor.

The catalysed reaction is L-arginine + ADP + phosphate + H(+) = L-citrulline + NH4(+) + ATP. Its pathway is amino-acid biosynthesis; L-proline biosynthesis. It participates in amino-acid degradation; L-arginine degradation. The protein operates within amino-acid biosynthesis; L-arginine biosynthesis. Its function is as follows. Arginine deiminase involved in an arginine synthetase pathway, which provides citrulline and ornithine, the precursors for proline biosynthesis. Catalyzes the conversion of L-arginine to citrulline while conserving the energy of arginine deimination to generate ATP from ADP and free phosphate. Is specific toward L-arginine and cannot use D-arginine, agmatine, guanidine, L-alanine-L-arginine dipeptide and L-arginine-L-alanine dipeptide. Can also use CDP, GDP or UDP, with lower activity (38%, 8.4% and 13.3%, respectively). The enzyme can also catalyze the reverse reaction: the ATP-dependent generation of arginine from citrulline in a single reaction by using free ammonia, without the requirement of aspartic acid. In vivo, most likely functions in the arginine catabolism to produce citrulline for proline biosynthesis while also generating ATP, but it can also contribute to arginine biosynthesis when the necessary precursors such as citrulline are abundant. In Thermococcus kodakarensis (strain ATCC BAA-918 / JCM 12380 / KOD1) (Pyrococcus kodakaraensis (strain KOD1)), this protein is Arginine synthetase ArcE.